The chain runs to 246 residues: Protein PHLOEM PROTEIN 2-LIKE A1 (246 aa).

As to expression, vascular tissues, specifically in phloem companion cell-sieve element complexes.

This chain is Protein PHLOEM PROTEIN 2-LIKE A1 (PP2A1), found in Arabidopsis thaliana (Mouse-ear cress).